The primary structure comprises 349 residues: Farnesyl pyrophosphate synthase vrtD (349 aa).

Residues K53, R56, and Q92 each coordinate isopentenyl diphosphate. D99 and D103 together coordinate Mg(2+). Dimethylallyl diphosphate is bound at residue R108. R109 serves as a coordination point for isopentenyl diphosphate. The dimethylallyl diphosphate site is built by K196, T197, Q236, K253, and K262.

Belongs to the FPP/GGPP synthase family. It depends on Mg(2+) as a cofactor.

The enzyme catalyses isopentenyl diphosphate + dimethylallyl diphosphate = (2E)-geranyl diphosphate + diphosphate. It catalyses the reaction isopentenyl diphosphate + (2E)-geranyl diphosphate = (2E,6E)-farnesyl diphosphate + diphosphate. Its pathway is secondary metabolite biosynthesis; terpenoid biosynthesis. In terms of biological role, farnesyl pyrophosphate synthase; part of the gene cluster that mediates the biosynthesis of viridicatumtoxin, a tetracycline-like fungal meroterpenoid with a unique, fused spirobicyclic ring system. The first step of the pathway is the production of the malonamoyl-CoA starter unit for the polyketide synthase vrtA. The aldolase vrtJ may be involved in the synthesis of the malonamate substrate for malonamoyl-CoA synthetase vrtB. The polyketide synthase vrtA then may utilize the malonamoyl-CoA starter unit, followed by sequential condensation of eight malonyl-CoA units to form the polyketide backbone. The cyclization of the last ring could be mediated by the lactamase-like protein vrtG. The proposed post-PKS tailoring steps are a hydroxylation at C5 catalyzed the cytochrome P450 monooxygenase vrtE, a hydroxylation at C12a catalyzed by VrtH and/or VrtI, and an O-methylation by the O-methyltransferase vrtF. VrtC is then proposed to catalyze the transfer of a geranyl group synthesized by vrtD to the aromatic C ring of the tetracyclic polyketide intermediate of viridicatumtoxin to yield previridicatumtoxin. Finally, the cytochrome P450 monooxygenase vrtK catalyzes the spirocyclization of the geranyl moiety of previridicatumtoxin to afford viridicatumtoxin. This chain is Farnesyl pyrophosphate synthase vrtD, found in Penicillium aethiopicum.